The sequence spans 157 residues: 6,7-dimethyl-8-ribityllumazine synthase 2 (157 aa).

5-amino-6-(D-ribitylamino)uracil contacts are provided by residues W21, 55–57, and 79–81; these read AYE and FVV. Residue R87 is the Proton donor of the active site. Residue S112 coordinates 5-amino-6-(D-ribitylamino)uracil. H126 serves as a coordination point for (2S)-2-hydroxy-3-oxobutyl phosphate.

Belongs to the DMRL synthase family. In terms of assembly, homodecamer, arranged as a dimer of pentamers.

The enzyme catalyses (2S)-2-hydroxy-3-oxobutyl phosphate + 5-amino-6-(D-ribitylamino)uracil = 6,7-dimethyl-8-(1-D-ribityl)lumazine + phosphate + 2 H2O + H(+). Its pathway is cofactor biosynthesis; riboflavin biosynthesis; riboflavin from 2-hydroxy-3-oxobutyl phosphate and 5-amino-6-(D-ribitylamino)uracil: step 1/2. Functionally, catalyzes the formation of 6,7-dimethyl-8-ribityllumazine by condensation of 5-amino-6-(D-ribitylamino)uracil with 3,4-dihydroxy-2-butanone 4-phosphate. This is the penultimate step in the biosynthesis of riboflavin. This chain is 6,7-dimethyl-8-ribityllumazine synthase 2 (ribH2), found in Mesorhizobium japonicum (strain LMG 29417 / CECT 9101 / MAFF 303099) (Mesorhizobium loti (strain MAFF 303099)).